The chain runs to 734 residues: Photosystem I P700 chlorophyll a apoprotein A2 (734 aa).

8 helical membrane passes run 46 to 69, 135 to 158, 175 to 199, 273 to 291, 330 to 353, 369 to 395, 417 to 439, and 517 to 535; these read IFAS…FHVA, LYTG…LHLQ, LNHH…HVAI, VAHH…GLMY, IHFQ…QHMY, AALY…IFFI, AIIS…LYVH, and FLVH…LILV. Residues Cys-559 and Cys-568 each coordinate [4Fe-4S] cluster. The next 2 helical transmembrane spans lie at 575 to 596 and 643 to 665; these read DFYL…YWHW and LSVW…MFLI. Residues His-654, Met-662, and Tyr-670 each contribute to the chlorophyll a site. Trp-671 lines the phylloquinone pocket. A helical membrane pass occupies residues 707–727; it reads LVGLVHFSVGYIFTYAAFLIA.

Belongs to the PsaA/PsaB family. In terms of assembly, the PsaA/B heterodimer binds the P700 chlorophyll special pair and subsequent electron acceptors. PSI consists of a core antenna complex that captures photons, and an electron transfer chain that converts photonic excitation into a charge separation. The eukaryotic PSI reaction center is composed of at least 11 subunits. P700 is a chlorophyll a/chlorophyll a' dimer, A0 is one or more chlorophyll a, A1 is one or both phylloquinones and FX is a shared 4Fe-4S iron-sulfur center. is required as a cofactor.

Its subcellular location is the plastid. The protein localises to the chloroplast thylakoid membrane. It carries out the reaction reduced [plastocyanin] + hnu + oxidized [2Fe-2S]-[ferredoxin] = oxidized [plastocyanin] + reduced [2Fe-2S]-[ferredoxin]. Its function is as follows. PsaA and PsaB bind P700, the primary electron donor of photosystem I (PSI), as well as the electron acceptors A0, A1 and FX. PSI is a plastocyanin-ferredoxin oxidoreductase, converting photonic excitation into a charge separation, which transfers an electron from the donor P700 chlorophyll pair to the spectroscopically characterized acceptors A0, A1, FX, FA and FB in turn. Oxidized P700 is reduced on the lumenal side of the thylakoid membrane by plastocyanin. The chain is Photosystem I P700 chlorophyll a apoprotein A2 from Pisum sativum (Garden pea).